The sequence spans 217 residues: Small ribosomal subunit protein uS3 (217 aa).

Positions 38–106 (IRKFVQKELA…QVHINIIEIK (69 aa)) constitute a KH type-2 domain.

The protein belongs to the universal ribosomal protein uS3 family. As to quaternary structure, part of the 30S ribosomal subunit. Forms a tight complex with proteins S10 and S14.

Functionally, binds the lower part of the 30S subunit head. Binds mRNA in the 70S ribosome, positioning it for translation. The polypeptide is Small ribosomal subunit protein uS3 (Streptococcus pneumoniae serotype 19F (strain G54)).